Reading from the N-terminus, the 141-residue chain is Small ribosomal subunit protein uS12 (141 aa).

A 3-methylthioaspartic acid modification is found at Asp89. A disordered region spans residues 104–141 (ASGAVGPSNTNKLNRNVSRSKYGVKRPKAGAKPASKAK). Residues 110–122 (PSNTNKLNRNVSR) are compositionally biased toward polar residues. Positions 125 to 141 (YGVKRPKAGAKPASKAK) are enriched in basic residues.

Belongs to the universal ribosomal protein uS12 family. As to quaternary structure, part of the 30S ribosomal subunit. Contacts proteins S8 and S17. May interact with IF1 in the 30S initiation complex.

With S4 and S5 plays an important role in translational accuracy. Functionally, interacts with and stabilizes bases of the 16S rRNA that are involved in tRNA selection in the A site and with the mRNA backbone. Located at the interface of the 30S and 50S subunits, it traverses the body of the 30S subunit contacting proteins on the other side and probably holding the rRNA structure together. The combined cluster of proteins S8, S12 and S17 appears to hold together the shoulder and platform of the 30S subunit. The chain is Small ribosomal subunit protein uS12 from Methylacidiphilum infernorum (isolate V4) (Methylokorus infernorum (strain V4)).